We begin with the raw amino-acid sequence, 191 residues long: GTP cyclohydrolase 1 (191 aa).

C80, H83, and C151 together coordinate Zn(2+).

It belongs to the GTP cyclohydrolase I family. Toroid-shaped homodecamer, composed of two pentamers of five dimers.

The enzyme catalyses GTP + H2O = 7,8-dihydroneopterin 3'-triphosphate + formate + H(+). It participates in cofactor biosynthesis; 7,8-dihydroneopterin triphosphate biosynthesis; 7,8-dihydroneopterin triphosphate from GTP: step 1/1. This is GTP cyclohydrolase 1 from Leifsonia xyli subsp. xyli (strain CTCB07).